The primary structure comprises 153 residues: Urease accessory protein UreE (153 aa).

This sequence belongs to the UreE family.

It localises to the cytoplasm. In terms of biological role, involved in urease metallocenter assembly. Binds nickel. Probably functions as a nickel donor during metallocenter assembly. In Acetivibrio thermocellus (strain ATCC 27405 / DSM 1237 / JCM 9322 / NBRC 103400 / NCIMB 10682 / NRRL B-4536 / VPI 7372) (Clostridium thermocellum), this protein is Urease accessory protein UreE.